Reading from the N-terminus, the 224-residue chain is Probable GTP-binding protein EngB (224 aa).

The EngB-type G domain occupies 31–204 (VGVEIAFAGR…LGILDQWCKP (174 aa)). GTP is bound by residues 39–46 (GRSNAGKS), 65–69 (GRTQL), 83–86 (DLPG), 150–153 (TKAD), and 183–185 (FSS). Mg(2+)-binding residues include Ser46 and Thr67.

The protein belongs to the TRAFAC class TrmE-Era-EngA-EngB-Septin-like GTPase superfamily. EngB GTPase family. Requires Mg(2+) as cofactor.

Necessary for normal cell division and for the maintenance of normal septation. This chain is Probable GTP-binding protein EngB, found in Shewanella piezotolerans (strain WP3 / JCM 13877).